The sequence spans 157 residues: Serine-protein kinase RsbW (157 aa).

Belongs to the anti-sigma-factor family.

The catalysed reaction is L-seryl-[protein] + ATP = O-phospho-L-seryl-[protein] + ADP + H(+). The enzyme catalyses L-threonyl-[protein] + ATP = O-phospho-L-threonyl-[protein] + ADP + H(+). Negative regulator of sigma-B activity. Phosphorylates and inactivates its specific antagonist protein, RsbV. Upon phosphorylation of RsbV, RsbW is released and binds to sigma-B, thereby blocking its ability to form an RNA polymerase holoenzyme (E-sigma-B). The sequence is that of Serine-protein kinase RsbW from Listeria monocytogenes serotype 4b (strain CLIP80459).